Consider the following 873-residue polypeptide: E3 ubiquitin-protein ligase UPL5 (873 aa).

The span at 1-19 shows a compositional bias: polar residues; that stretch reads MTLSRSSADDSTNNANRSY. Disordered regions lie at residues 1-37 and 70-90; these read MTLSRSSADDSTNNANRSYSAVAGTDNKRKRDEDSSD and RSGENSRSLSSSGECSSSNRP. The 77-residue stretch at 95-171 folds into the Ubiquitin-like domain; sequence LQIFVRMMSG…LQLVARMQST (77 aa). Residues 272 to 296 form the C-type lectin domain; that stretch reads CLPIVLEFCKLLRKVCPDQKLYVTC. Positions 532–873 constitute an HECT domain; the sequence is SPEALHGGLF…DHVSSSFGKW (342 aa). Cys-839 functions as the Glycyl thioester intermediate in the catalytic mechanism.

It belongs to the UPL family. Interacts with WRKY53.

The protein localises to the cytoplasm. It catalyses the reaction S-ubiquitinyl-[E2 ubiquitin-conjugating enzyme]-L-cysteine + [acceptor protein]-L-lysine = [E2 ubiquitin-conjugating enzyme]-L-cysteine + N(6)-ubiquitinyl-[acceptor protein]-L-lysine.. The protein operates within protein modification; protein ubiquitination. Functionally, E3 ubiquitin protein ligase that regulates leaf senescence through ubiquitination and subsequent degradation of WRKY53. The chain is E3 ubiquitin-protein ligase UPL5 (UPL5) from Arabidopsis thaliana (Mouse-ear cress).